We begin with the raw amino-acid sequence, 269 residues long: Putative biopolymer transport protein ExbD (269 aa).

Over 1–40 (MASSPKAPKSHRKFQSIYHPTRPLSLWQDNQHDQGEVRIE) the chain is Cytoplasmic. The helical transmembrane segment at 41 to 61 (IIPLIDVVFCILTFFILGAVG) threads the bilayer. At 62–269 (LSRQQAISLD…GNTVPSAPQQ (208 aa)) the chain is on the periplasmic side. Residues 190-269 (NGANPGMSNF…GNTVPSAPQQ (80 aa)) are disordered. Positions 193–204 (NPGMSNFNNSNP) are enriched in low complexity.

It belongs to the ExbD/TolR family.

It localises to the cell inner membrane. This is Putative biopolymer transport protein ExbD from Synechocystis sp. (strain ATCC 27184 / PCC 6803 / Kazusa).